The primary structure comprises 515 residues: Probable cytochrome P450 6d4 (515 aa).

Cysteine 457 is a heme binding site.

The protein belongs to the cytochrome P450 family. It depends on heme as a cofactor.

It localises to the endoplasmic reticulum membrane. The protein localises to the microsome membrane. In terms of biological role, may be involved in the metabolism of insect hormones and in the breakdown of synthetic insecticides. This chain is Probable cytochrome P450 6d4 (Cyp6d4), found in Drosophila melanogaster (Fruit fly).